A 153-amino-acid chain; its full sequence is Endoribonuclease YbeY (153 aa).

Positions 118, 122, and 128 each coordinate Zn(2+).

Belongs to the endoribonuclease YbeY family. Zn(2+) is required as a cofactor.

The protein resides in the cytoplasm. Its function is as follows. Single strand-specific metallo-endoribonuclease involved in late-stage 70S ribosome quality control and in maturation of the 3' terminus of the 16S rRNA. This is Endoribonuclease YbeY from Staphylococcus haemolyticus (strain JCSC1435).